Reading from the N-terminus, the 459-residue chain is Glycosyl hydrolase family 109 protein (459 aa).

The segment at residues 1–31 is a signal peptide (tat-type signal); that stretch reads MHNIHRRNFLKAAGAATAGLVTANIALNAYA. Residues 64 to 65, Asp86, 135 to 138, 155 to 156, and Asn184 each bind NAD(+); these read ER, WEWH, and EV. Residues Tyr213, Arg232, 244 to 247, and Tyr326 contribute to the substrate site; that span reads YPTH. Tyr244 provides a ligand contact to NAD(+).

It belongs to the Gfo/Idh/MocA family. Glycosyl hydrolase 109 subfamily. Requires NAD(+) as cofactor. Post-translationally, predicted to be exported by the Tat system. The position of the signal peptide cleavage has not been experimentally proven.

Its function is as follows. Glycosidase. This is Glycosyl hydrolase family 109 protein from Shewanella baltica (strain OS155 / ATCC BAA-1091).